The following is a 264-amino-acid chain: Small ribosomal subunit protein uS2 (264 aa).

The interval 225–264 (GKKAREERQLAAAKDAAGDAKPEAEEAPVAAEAEEAPAAE) is disordered.

It belongs to the universal ribosomal protein uS2 family.

This Corynebacterium glutamicum (strain R) protein is Small ribosomal subunit protein uS2.